The following is a 238-amino-acid chain: MLDREGFRPNVGIILINARNEVFWGKRIGEHSWQFPQGGIKYGETPEQAMYRELHEEVGLLPEHVRIVGRTRDWLRYEVPDKFIRREIRGHYRGQKQIWFLLRMVGRDCDIQLRATEHPEFDAWRWSQYWVPLDAVIEFKREVYQMALSELSRFVQRSHRAPLSPYGRGGPHRERDGRDNRAGGQAGRNDQNTRGQRQPPTLMVTTSTVIVETVITSRPAAQPIDSSNPDDTPSKDSL.

One can recognise a Nudix hydrolase domain in the interval 6–149 (GFRPNVGIIL…KREVYQMALS (144 aa)). The Nudix box motif lies at 38–59 (GGIKYGETPEQAMYRELHEEVG). A disordered region spans residues 161–238 (APLSPYGRGG…PDDTPSKDSL (78 aa)). Over residues 171 to 181 (PHRERDGRDNR) the composition is skewed to basic and acidic residues. The span at 188-199 (RNDQNTRGQRQP) shows a compositional bias: polar residues. Positions 204 to 217 (VTTSTVIVETVITS) are enriched in low complexity.

It belongs to the Nudix hydrolase family. RppH subfamily. The cofactor is a divalent metal cation.

In terms of biological role, accelerates the degradation of transcripts by removing pyrophosphate from the 5'-end of triphosphorylated RNA, leading to a more labile monophosphorylated state that can stimulate subsequent ribonuclease cleavage. The polypeptide is RNA pyrophosphohydrolase (Ralstonia nicotianae (strain ATCC BAA-1114 / GMI1000) (Ralstonia solanacearum)).